The sequence spans 156 residues: Large ribosomal subunit protein uL22 (156 aa).

This sequence belongs to the universal ribosomal protein uL22 family. As to quaternary structure, part of the 50S ribosomal subunit.

Functionally, this protein binds specifically to 23S rRNA. It makes multiple contacts with different domains of the 23S rRNA in the assembled 50S subunit and ribosome. The globular domain of the protein is located near the polypeptide exit tunnel on the outside of the subunit, while an extended beta-hairpin is found that lines the wall of the exit tunnel in the center of the 70S ribosome. This chain is Large ribosomal subunit protein uL22, found in Sulfolobus acidocaldarius (strain ATCC 33909 / DSM 639 / JCM 8929 / NBRC 15157 / NCIMB 11770).